The chain runs to 86 residues: Putative membrane protein insertion efficiency factor (86 aa).

The protein belongs to the UPF0161 family.

Its subcellular location is the cell membrane. Functionally, could be involved in insertion of integral membrane proteins into the membrane. This chain is Putative membrane protein insertion efficiency factor, found in Streptococcus pyogenes serotype M1.